Here is a 290-residue protein sequence, read N- to C-terminus: 4-hydroxy-3-methylbut-2-enyl diphosphate reductase (290 aa).

Residue Cys-12 coordinates [4Fe-4S] cluster. Positions 50 and 83 each coordinate (2E)-4-hydroxy-3-methylbut-2-enyl diphosphate. His-50 and His-83 together coordinate dimethylallyl diphosphate. His-50 and His-83 together coordinate isopentenyl diphosphate. Cys-105 contributes to the [4Fe-4S] cluster binding site. Residue His-133 participates in (2E)-4-hydroxy-3-methylbut-2-enyl diphosphate binding. His-133 contributes to the dimethylallyl diphosphate binding site. Residue His-133 coordinates isopentenyl diphosphate. Glu-135 acts as the Proton donor in catalysis. Residue Thr-173 coordinates (2E)-4-hydroxy-3-methylbut-2-enyl diphosphate. [4Fe-4S] cluster is bound at residue Cys-202. Residues Ser-230, Asn-232, and Ser-274 each contribute to the (2E)-4-hydroxy-3-methylbut-2-enyl diphosphate site. Dimethylallyl diphosphate is bound by residues Ser-230, Asn-232, and Ser-274. Isopentenyl diphosphate is bound by residues Ser-230, Asn-232, and Ser-274.

Belongs to the IspH family. It depends on [4Fe-4S] cluster as a cofactor.

The enzyme catalyses isopentenyl diphosphate + 2 oxidized [2Fe-2S]-[ferredoxin] + H2O = (2E)-4-hydroxy-3-methylbut-2-enyl diphosphate + 2 reduced [2Fe-2S]-[ferredoxin] + 2 H(+). It catalyses the reaction dimethylallyl diphosphate + 2 oxidized [2Fe-2S]-[ferredoxin] + H2O = (2E)-4-hydroxy-3-methylbut-2-enyl diphosphate + 2 reduced [2Fe-2S]-[ferredoxin] + 2 H(+). It participates in isoprenoid biosynthesis; dimethylallyl diphosphate biosynthesis; dimethylallyl diphosphate from (2E)-4-hydroxy-3-methylbutenyl diphosphate: step 1/1. The protein operates within isoprenoid biosynthesis; isopentenyl diphosphate biosynthesis via DXP pathway; isopentenyl diphosphate from 1-deoxy-D-xylulose 5-phosphate: step 6/6. Catalyzes the conversion of 1-hydroxy-2-methyl-2-(E)-butenyl 4-diphosphate (HMBPP) into a mixture of isopentenyl diphosphate (IPP) and dimethylallyl diphosphate (DMAPP). Acts in the terminal step of the DOXP/MEP pathway for isoprenoid precursor biosynthesis. This is 4-hydroxy-3-methylbut-2-enyl diphosphate reductase from Nitratidesulfovibrio vulgaris (strain ATCC 29579 / DSM 644 / CCUG 34227 / NCIMB 8303 / VKM B-1760 / Hildenborough) (Desulfovibrio vulgaris).